Consider the following 190-residue polypeptide: Probable thymidylate kinase (190 aa).

7-14 (GIDGAGKT) serves as a coordination point for ATP.

This sequence belongs to the thymidylate kinase family.

It catalyses the reaction dTMP + ATP = dTDP + ADP. This Thermoplasma volcanium (strain ATCC 51530 / DSM 4299 / JCM 9571 / NBRC 15438 / GSS1) protein is Probable thymidylate kinase.